The following is a 513-amino-acid chain: MATTVDSRSSGFTGNSCDPGTAQEHVQAVTRNYITHPRVTYRTVCSVNGPLVVLDQVKFAQYAEIVNFTLPDGTQRSGQVLEVAGTKAIVQVFEGTSGIDSQKTTCEFTGDILRTPVSEDMLGRIFNGSGKPIDKGPAVMAEEFLDINGQPINPHDRIYPEEMIQTGISPIDVMNSIARGQKIPIFSAAGLPHNEIAAQICRQAGLVKKSKAVLDYHEDNFAIVFAAMGVNMETARFFKSDFEQNGTMGNVCLFLNLANDPTIERIITPRLALTTAEFLAYQCEKHVLVILTDMSSYAEALREVSAAREEVPGRRGFPGYMYTDLATIYERAGRVEGRGGSITQIPILTMPNDDITHPIPDLTGFITEGQIYVDRQLHNRQVYPPINVLPSLSRLMKSAIGEGMTRKDHGDVSNQLYACYAIGKDVQAMKAVVGEEALTSEDLLYLEFLQKFEKNFITQGPYENRTVFESLDLGWKLLRIFPKEMLKRIPQSMTDEFYSRQGAQQDPASDTAL.

The segment covering 1 to 18 (MATTVDSRSSGFTGNSCD) has biased composition (polar residues). The tract at residues 1–21 (MATTVDSRSSGFTGNSCDPGT) is disordered. Residue Arg-394 participates in ATP binding. Positions 510–513 (DTAL) match the PDZ-binding motif.

Belongs to the ATPase alpha/beta chains family. In terms of assembly, V-ATPase is a heteromultimeric enzyme made up of two complexes: the ATP-hydrolytic V1 complex and the proton translocation V0 complex. The V1 complex consists of three catalytic AB heterodimers that form a heterohexamer, three peripheral stalks each consisting of EG heterodimers, one central rotor including subunits D and F, and the regulatory subunits C and H. The proton translocation complex V0 consists of the proton transport subunit a, a ring of proteolipid subunits c9c'', rotary subunit d, subunits e and f, and the accessory subunits ATP6AP1/Ac45 and ATP6AP2/PRR. Forms a complex with NHERF1 and SCL4A7. Highly expressed in the kidney; found in early distal nephron, encompassing thick ascending limbs and distal convoluted tubules and in the alpha-intercalated cells of the cortical collecting ducts (at protein level). Expressed in the olfactory epithelium (at protein level). Expressed at lower levels in the testis.

The protein localises to the apical cell membrane. The protein resides in the basolateral cell membrane. Non-catalytic subunit of the V1 complex of vacuolar(H+)-ATPase (V-ATPase), a multisubunit enzyme composed of a peripheral complex (V1) that hydrolyzes ATP and a membrane integral complex (V0) that translocates protons. V-ATPase is responsible for acidifying and maintaining the pH of intracellular compartments and in some cell types, is targeted to the plasma membrane, where it is responsible for acidifying the extracellular environment. Essential for the proper assembly and activity of V-ATPase. In renal intercalated cells, mediates secretion of protons (H+) into the urine thereby ensuring correct urinary acidification. Required for optimal olfactory function by mediating the acidification of the nasal olfactory epithelium. The sequence is that of V-type proton ATPase subunit B, kidney isoform (Atp6v1b1) from Mus musculus (Mouse).